The primary structure comprises 122 residues: Large ribosomal subunit protein uL14 (122 aa).

This sequence belongs to the universal ribosomal protein uL14 family. In terms of assembly, part of the 50S ribosomal subunit. Forms a cluster with proteins L3 and L19. In the 70S ribosome, L14 and L19 interact and together make contacts with the 16S rRNA in bridges B5 and B8.

Functionally, binds to 23S rRNA. Forms part of two intersubunit bridges in the 70S ribosome. This Alkalilimnicola ehrlichii (strain ATCC BAA-1101 / DSM 17681 / MLHE-1) protein is Large ribosomal subunit protein uL14.